Reading from the N-terminus, the 61-residue chain is Large ribosomal subunit protein bL32 (61 aa).

Residues Met1–Gln18 are compositionally biased toward basic residues. The interval Met1 to His20 is disordered.

It belongs to the bacterial ribosomal protein bL32 family.

In Mycoplasmopsis pulmonis (strain UAB CTIP) (Mycoplasma pulmonis), this protein is Large ribosomal subunit protein bL32 (rpmF).